The sequence spans 462 residues: DIMBOA UDP-glucosyltransferase BX9 (462 aa).

Residue His-24 is the Proton acceptor of the active site. Residue His-24 coordinates an anthocyanidin. The active-site Charge relay is Asp-115. Thr-137, Ala-336, Gln-338, His-353, Trp-356, Asn-357, Ser-358, and Glu-361 together coordinate UDP-alpha-D-glucose. Gly-376 provides a ligand contact to an anthocyanidin. UDP-alpha-D-glucose contacts are provided by Asp-377 and Gln-378.

It belongs to the UDP-glycosyltransferase family. Requires Mg(2+) as cofactor. Ca(2+) serves as cofactor. As to expression, expressed at the same levels in roots and shoots.

It carries out the reaction DIMBOA + UDP-alpha-D-glucose = DIMBOA beta-D-glucoside + UDP + H(+). The catalysed reaction is DIBOA + UDP-alpha-D-glucose = DIBOA beta-D-glucoside + UDP + H(+). Its function is as follows. Glucosyltransferase involved in the last step of benzoxazinoid glucoside biosynthesis. Catalyzes the glucosylation of hydroxamic acids utilizing UDP-glucose as glucose doner, reducing the toxicity of these natural insecticides for storage. Can use DIMBOA and DIBOA as substrates, HMBOA (2-hydroxy-7-methoxy-2H-1,4-benzoxazin-3(4H)-one) and HBOA (2-hydroxy-2H-1,4-benzoxazin-3(4H)-one) with a lower efficiency, but not indole acetic acid or quercitin. This Zea mays (Maize) protein is DIMBOA UDP-glucosyltransferase BX9 (BX9).